The following is a 252-amino-acid chain: Pyrroloquinoline-quinone synthase (252 aa).

It belongs to the PqqC family.

The enzyme catalyses 6-(2-amino-2-carboxyethyl)-7,8-dioxo-1,2,3,4,7,8-hexahydroquinoline-2,4-dicarboxylate + 3 O2 = pyrroloquinoline quinone + 2 H2O2 + 2 H2O + H(+). The protein operates within cofactor biosynthesis; pyrroloquinoline quinone biosynthesis. Its function is as follows. Ring cyclization and eight-electron oxidation of 3a-(2-amino-2-carboxyethyl)-4,5-dioxo-4,5,6,7,8,9-hexahydroquinoline-7,9-dicarboxylic-acid to PQQ. This chain is Pyrroloquinoline-quinone synthase, found in Acinetobacter baumannii (strain ACICU).